The sequence spans 231 residues: Large ribosomal subunit protein uL1 (231 aa).

Belongs to the universal ribosomal protein uL1 family. In terms of assembly, part of the 50S ribosomal subunit.

Binds directly to 23S rRNA. The L1 stalk is quite mobile in the ribosome, and is involved in E site tRNA release. Its function is as follows. Protein L1 is also a translational repressor protein, it controls the translation of the L11 operon by binding to its mRNA. The chain is Large ribosomal subunit protein uL1 from Thioalkalivibrio sulfidiphilus (strain HL-EbGR7).